Consider the following 415-residue polypeptide: ATP-dependent RNA helicase RhlB (415 aa).

A Q motif motif is present at residues K9–A37. In terms of domain architecture, Helicase ATP-binding spans L40–V219. A53–T60 provides a ligand contact to ATP. Positions D165–D168 match the DEAD box motif. Residues R245 to L390 enclose the Helicase C-terminal domain. Residues P396–G415 form a disordered region. The segment covering R398–G415 has biased composition (basic residues).

Belongs to the DEAD box helicase family. RhlB subfamily. As to quaternary structure, component of the RNA degradosome, which is a multiprotein complex involved in RNA processing and mRNA degradation.

The protein resides in the cytoplasm. The catalysed reaction is ATP + H2O = ADP + phosphate + H(+). In terms of biological role, DEAD-box RNA helicase involved in RNA degradation. Has RNA-dependent ATPase activity and unwinds double-stranded RNA. This Sodalis glossinidius (strain morsitans) protein is ATP-dependent RNA helicase RhlB.